The primary structure comprises 160 residues: Probable chemoreceptor glutamine deamidase CheD 1 (160 aa).

It belongs to the CheD family.

It catalyses the reaction L-glutaminyl-[protein] + H2O = L-glutamyl-[protein] + NH4(+). Functionally, probably deamidates glutamine residues to glutamate on methyl-accepting chemotaxis receptors (MCPs), playing an important role in chemotaxis. The protein is Probable chemoreceptor glutamine deamidase CheD 1 of Syntrophus aciditrophicus (strain SB).